The following is a 709-amino-acid chain: Pentatricopeptide repeat-containing protein At5g42310, chloroplastic (709 aa).

A chloroplast-targeting transit peptide spans 1–54; it reads MLLLQQPPLVSTRFHSLYFLTHHHHHHHRFFQPPISAFSATTSASLPSPSPSSS. 14 PPR repeats span residues 196–230, 231–267, 268–302, 303–337, 338–372, 373–407, 408–442, 443–477, 478–512, 513–547, 548–582, 583–617, 618–652, and 653–687; these read TPLT…GYQS, DFVN…KLEL, DVQL…GLSA, KTAT…GIKP, RTRA…GVSP, DEHT…DVQP, NSFV…GVKP, DRQF…GIEP, DRVT…GCLP, CATT…GILP, NVVT…GLKP, SSTM…GLKP, SLLA…GVKP, and DVVT…GCKP.

The protein belongs to the PPR family. P subfamily. As to quaternary structure, interacts with PDE338.

Its subcellular location is the plastid. The protein localises to the chloroplast stroma. The protein resides in the chloroplast thylakoid. It localises to the chloroplast. Required for chloroplast protein synthesis and accumulation of subunits of the thylakoid protein complexes. Activates psaC and petA translation by binding their 5'-UTRs. Required for the correct processing of petB and petD mRNAs. Interacts with the petB and petD intergenic region and is required for the generation of petB and petD monocistronic RNAs. This is Pentatricopeptide repeat-containing protein At5g42310, chloroplastic from Arabidopsis thaliana (Mouse-ear cress).